The chain runs to 848 residues: MYLYIETLKQRLDAINQLRVDRALAAMGPAFQQVYSLLPTLLHYHHPLMPGYLDGNVPKGICLYTPDETQRHYLNELELYRGMSVQDPPKGELPITGVYTMGSTSSVGQSCSSDLDIWVCHQSWLDSEERQLLQRKCSLLESWAASLGVEVSFFLIDENRFRHNESGSLGGEDCGSTQHILLLDEFYRTAVRLAGKRILWNMVPCDEEEHYDDYVMTLYAQGVLTPNEWLDLGGLSSLSAEEYFGASLWQLYKSIDSPYKAVLKTLLLEAYSWEYPNPRLLAKDIKQRLHDGEIVSFGLDPYCMMLERVTEYLTAIEDFTRLDLVRRCFYLKVCEKLSRERACVGWRREVLSQLVKEWEWDDARLAMLDNRANWKIDQVREAHNELLDAMMQSYRNLIRFARRNNLSVSASPQDIGVLTRKLYAAFEALPGKVTLVNPQISPDLSEPNLTFIYVPPGRANRSGWYLYNRAPNIESIISHQPLEYNRYLNKLVAWAWFNGLLTSRTRLYIKGNGVVDLPKLQEMVADVSHHFPLRLPAPTPKALYSPCEIRHLAIIVNLEYDPTAAFRNQVVHFDFRKLDVFSFGENQNCLVGSVDLLYRNSWNEVRTLHFNGEQSMIEALKTILGKMHQDAAPPDSVEVFCYSQHLRGLIRTRVQQLVSECIELRLSSTRQETGRFKALRVSGQTWGLFFERLNVSVQKLENAIEFYGAISHNKLHGLSVQVETNHVKLPAVVDGFASEGIIQFFFEETQDENGFNIYILDESNRVEVYHHCEGSKEELVRDVSRFYSSSHDRFTYGSSFINFNLPQFYQIVKVDGREQVIPFRTKSIGNMPPANQEHDAPLLQQYFS.

A catalytic region spans residues 1–535 (MYLYIETLKQ…DVSHHFPLRL (535 aa)). The tract at residues 541 to 848 (KALYSPCEIR…DAPLLQQYFS (308 aa)) is regulatory. Histidine 609 bears the Phosphohistidine; by CRR mark.

Belongs to the adenylyl cyclase class-1 family.

The protein localises to the cytoplasm. The enzyme catalyses ATP = 3',5'-cyclic AMP + diphosphate. In Escherichia coli O6:H1 (strain CFT073 / ATCC 700928 / UPEC), this protein is Adenylate cyclase (cyaA).